The following is a 1004-amino-acid chain: 2-oxoglutarate dehydrogenase E1 component (1004 aa).

It belongs to the alpha-ketoglutarate dehydrogenase family. As to quaternary structure, homodimer. Part of the 2-oxoglutarate dehydrogenase (OGDH) complex composed of E1 (2-oxoglutarate dehydrogenase), E2 (dihydrolipoamide succinyltransferase) and E3 (dihydrolipoamide dehydrogenase); the complex contains multiple copies of the three enzymatic components (E1, E2 and E3). Thiamine diphosphate serves as cofactor.

It carries out the reaction N(6)-[(R)-lipoyl]-L-lysyl-[protein] + 2-oxoglutarate + H(+) = N(6)-[(R)-S(8)-succinyldihydrolipoyl]-L-lysyl-[protein] + CO2. Functionally, E1 component of the 2-oxoglutarate dehydrogenase (OGDH) complex which catalyzes the decarboxylation of 2-oxoglutarate, the first step in the conversion of 2-oxoglutarate to succinyl-CoA and CO(2). In Brucella melitensis biotype 2 (strain ATCC 23457), this protein is 2-oxoglutarate dehydrogenase E1 component.